The following is a 542-amino-acid chain: MSASSRFIPEHRRQNYKGKGTFQADELRRRRETQQIEIRKQKREENLNKRRNLVDVQEPAEETIPLEQDKENDLELELQLPDLLKALYSDDIEAQIQATAKFRKALSKETNPPIQKVIDAGVVPRFVEFLSHENNLLKFEASWALTNVASGSSNQTHVVVEANAVPVFVSLLSSSEQDVREQAVWALGNIAGDSPMCRDHVLQCGVLEPLLNIIESNRRLSMLRNSTWTLSNMCRGKNPQPDWNSISQVIPVLSKLIYTLDEDVLVDALWAISYLSDGANEKIQAIIDAGIPRRLVELLMHPSAQVQTPALRSVGNIVTGDDVQTQVIINCGALSALLSLLSSPRDGVRKEACWTISNITAGNSSQIQYVIEANIIPPLIHLLTTADFKIQKEACWAISNATSGGARRPDQIRYLVEQGAIKPLCNLLACQDNKIIQVALDGIENILRVGELDRANNPDKINLYAVYVEDAGGMDLIHECQNSSNSEIYQKAYNIIEKFFGEEDEIEELEPETVGDTFTFGTTQEPAGDFQFSATNAEDMAM.

The segment at 1 to 29 (MSASSRFIPEHRRQNYKGKGTFQADELRR) is disordered. In terms of domain architecture, IBB spans 1–60 (MSASSRFIPEHRRQNYKGKGTFQADELRRRRETQQIEIRKQKREENLNKRRNLVDVQEPA). 8 ARM repeats span residues 114–155 (IQKV…SSNQ), 156–197 (THVV…SPMC), 198–240 (RDHV…KNPQ), 241–282 (PDWN…ANEK), 283–324 (IQAI…DDVQ), 325–366 (TQVI…NSSQ), 367–408 (IQYV…GARR), and 409–453 (PDQI…GELD).

This sequence belongs to the importin alpha family. As to quaternary structure, interacts with pap1.

The protein localises to the nucleus. In terms of biological role, binds specifically and directly to substrates containing either a simple or bipartite NLS motif. Promotes docking of import substrates to the nuclear envelope. Seems to act as a cytosolic receptor for both simple and bipartite NLS motifs. Has an essential role in mitotic chromosome condensation. Involved in nuclear protein import. Required for efficient nuclear import of both an SV40 nuclear localization signal-containing reporter protein and the pap1 component of the stress response MAP kinase pathway. Required for proper mitotic progression. The polypeptide is Importin subunit alpha-1 (cut15) (Schizosaccharomyces pombe (strain 972 / ATCC 24843) (Fission yeast)).